The chain runs to 932 residues: Protocadherin gamma-A7 (932 aa).

The N-terminal stretch at 1-28 (MAAQPRGGDCRGFVLLSILLGTPWEAWA) is a signal peptide. 6 Cadherin domains span residues 29–133 (GRIL…VPRF), 134–242 (LTEE…TPVF), 243–347 (SLPQ…APEV), 348–452 (TMTS…PPTF), 453–562 (PHSS…PPEI), and 570–682 (DGST…EPSD). The Extracellular portion of the chain corresponds to 29 to 692 (GRILYSVSEE…GPYNYDLTLY (664 aa)). N-linked (GlcNAc...) asparagine glycans are attached at residues Asn-419 and Asn-545. Residues 693-713 (LVVAVAAVSCVFLAFVLVLLA) form a helical membrane-spanning segment. Residues 714–932 (LRLRRWHKSR…KKKSGKKEKK (219 aa)) lie on the Cytoplasmic side of the membrane. Disordered regions lie at residues 804-841 (VPSI…WPNN) and 902-932 (ATLT…KEKK). Residues 806-841 (SIQQAPPNTDWRFSQAQRPGTSGSQNGDDTGTWPNN) are compositionally biased toward polar residues. Residues 922 to 932 (NKKKSGKKEKK) show a composition bias toward basic residues.

Its subcellular location is the cell membrane. Potential calcium-dependent cell-adhesion protein. May be involved in the establishment and maintenance of specific neuronal connections in the brain. The polypeptide is Protocadherin gamma-A7 (PCDHGA7) (Pan troglodytes (Chimpanzee)).